The chain runs to 206 residues: Small ribosomal subunit protein uS4 (206 aa).

An S4 RNA-binding domain is found at 96 to 156 (CRLDNVVYRM…EKSKNQLRIA (61 aa)).

It belongs to the universal ribosomal protein uS4 family. As to quaternary structure, part of the 30S ribosomal subunit. Contacts protein S5. The interaction surface between S4 and S5 is involved in control of translational fidelity.

In terms of biological role, one of the primary rRNA binding proteins, it binds directly to 16S rRNA where it nucleates assembly of the body of the 30S subunit. With S5 and S12 plays an important role in translational accuracy. In Pseudomonas aeruginosa (strain LESB58), this protein is Small ribosomal subunit protein uS4.